The chain runs to 246 residues: Bacteriorhodopsin-II-like protein (246 aa).

7 helical membrane-spanning segments follow: residues 7–27 (EATW…YFAV), 45–65 (TLIP…LGVI), 82–102 (YADW…VAGA), 107–127 (LYKL…GSMM), 135–155 (IVWW…LLGE), 182–202 (WALY…IIAV), and 205–225 (EIML…AVLL). Lysine 217 is modified (N6-(retinylidene)lysine).

The protein belongs to the archaeal/bacterial/fungal opsin family. The covalent binding of retinal to the apoprotein, bacterioopsin, generates bacteriorhodopsin.

The protein localises to the cell membrane. Functionally, has no proton-pumping activity but is potentially capable of functioning as a sensory SRII-like protein. The chromophore contains 36.5% all-trans-, 7.6% 11-cis- and 56.4% 13-cis-retinal in the dark and 30.1% 11-cis- and 47.7% 13-cis-retinal upon illumination with &gt;460 nm light. In Haloquadratum walsbyi (strain DSM 16790 / HBSQ001), this protein is Bacteriorhodopsin-II-like protein (bop2).